Here is a 511-residue protein sequence, read N- to C-terminus: 2-isopropylmalate synthase (511 aa).

The Pyruvate carboxyltransferase domain maps to 6-269 (IIIFDTTLRD…YTDIKCENIS (264 aa)). 4 residues coordinate Mn(2+): aspartate 15, histidine 203, histidine 205, and asparagine 239. Residues 394–511 (VLEKLSVISG…SLKVEERKMA (118 aa)) form a regulatory domain region.

The protein belongs to the alpha-IPM synthase/homocitrate synthase family. LeuA type 1 subfamily. In terms of assembly, homodimer. It depends on Mn(2+) as a cofactor.

It is found in the cytoplasm. The catalysed reaction is 3-methyl-2-oxobutanoate + acetyl-CoA + H2O = (2S)-2-isopropylmalate + CoA + H(+). The protein operates within amino-acid biosynthesis; L-leucine biosynthesis; L-leucine from 3-methyl-2-oxobutanoate: step 1/4. Functionally, catalyzes the condensation of the acetyl group of acetyl-CoA with 3-methyl-2-oxobutanoate (2-ketoisovalerate) to form 3-carboxy-3-hydroxy-4-methylpentanoate (2-isopropylmalate). This chain is 2-isopropylmalate synthase, found in Campylobacter jejuni subsp. doylei (strain ATCC BAA-1458 / RM4099 / 269.97).